A 722-amino-acid chain; its full sequence is Host cell factor 2 (722 aa).

4 Kelch repeats span residues 34-79, 83-130, 207-255, and 257-303; these read LMII…GFVC, RILV…RLGH, KMYV…VIGN, and MYIF…VSDS. 3 consecutive Fibronectin type-III domains span residues 359–460, 514–604, and 606–716; these read APSQ…VDSS, TPSN…TCTP, and FPGA…DQEK. Residues 398–476 are disordered; the sequence is ATSSDSSAAP…LAPNTSNNSS (79 aa). The segment covering 419–436 has biased composition (polar residues); it reads QGSNSTLHNSVSDTVNST.

In terms of assembly, binds KMT2A/MLL1. Component of the MLL1/MLL complex, at least composed of KMT2A/MLL1, ASH2L, RBBP5, DPY30, WDR5, MEN1, HCFC1 and HCFC2. Interacts with TASOR. Expressed in the spermatogonia, spermatocytes and ovary.

It is found in the cytoplasm. The protein resides in the nucleus. The chain is Host cell factor 2 (Hcfc2) from Mus musculus (Mouse).